Reading from the N-terminus, the 1097-residue chain is Translation initiation factor IF-2 (1097 aa).

The segment at 79–458 (LEKRVSPQAD…RVIKKKPKKA (380 aa)) is disordered. Basic and acidic residues predominate over residues 97-112 (AKKEASQEKADAHAKL). A compositionally biased stretch (low complexity) spans 157–173 (AATLAVEEAPIAAAPTE). Composition is skewed to basic and acidic residues over residues 174–190 (EPMH…KIDS) and 202–221 (VEVH…HAEE). Low complexity predominate over residues 224 to 236 (TPTTEASSEETSA). Residues 258 to 267 (RKTQNTTNVS) show a composition bias toward polar residues. The span at 268–286 (EENKQHEKQPETLKSDKAM) shows a compositional bias: basic and acidic residues. Over residues 340–363 (SDSLQAEISRQQNEISNRFSQSEN) the composition is skewed to polar residues. The segment covering 376–385 (HKKKRKRKKN) has biased composition (basic residues). Residues 402 to 443 (PKQEEKPVKKEKPKEREKPAAGKKEQTPGKKPVREDQKERVL) are compositionally biased toward basic and acidic residues. In terms of domain architecture, tr-type G spans 591 to 761 (TRPPVVTIMG…LVEAELLELK (171 aa)). The tract at residues 600–607 (GHVDHGKT) is G1. 600–607 (GHVDHGKT) provides a ligand contact to GTP. Residues 625–629 (GITQH) are G2. A G3 region spans residues 647–650 (DTPG). GTP is bound by residues 647–651 (DTPGH) and 701–704 (NKID). The tract at residues 701–704 (NKID) is G4. The tract at residues 737–739 (SAK) is G5.

It belongs to the TRAFAC class translation factor GTPase superfamily. Classic translation factor GTPase family. IF-2 subfamily.

It localises to the cytoplasm. Its function is as follows. One of the essential components for the initiation of protein synthesis. Protects formylmethionyl-tRNA from spontaneous hydrolysis and promotes its binding to the 30S ribosomal subunits. Also involved in the hydrolysis of GTP during the formation of the 70S ribosomal complex. This is Translation initiation factor IF-2 from Chloroherpeton thalassium (strain ATCC 35110 / GB-78).